Here is a 403-residue protein sequence, read N- to C-terminus: Probable tRNA sulfurtransferase (403 aa).

The THUMP domain occupies 60-165 (QLVEERLKPI…KEGVFLSCRT (106 aa)). ATP-binding positions include 183 to 184 (ML), 208 to 209 (HF), R265, G287, and Q296.

The protein belongs to the ThiI family.

The protein resides in the cytoplasm. The enzyme catalyses [ThiI sulfur-carrier protein]-S-sulfanyl-L-cysteine + a uridine in tRNA + 2 reduced [2Fe-2S]-[ferredoxin] + ATP + H(+) = [ThiI sulfur-carrier protein]-L-cysteine + a 4-thiouridine in tRNA + 2 oxidized [2Fe-2S]-[ferredoxin] + AMP + diphosphate. The catalysed reaction is [ThiS sulfur-carrier protein]-C-terminal Gly-Gly-AMP + S-sulfanyl-L-cysteinyl-[cysteine desulfurase] + AH2 = [ThiS sulfur-carrier protein]-C-terminal-Gly-aminoethanethioate + L-cysteinyl-[cysteine desulfurase] + A + AMP + 2 H(+). It functions in the pathway cofactor biosynthesis; thiamine diphosphate biosynthesis. In terms of biological role, catalyzes the ATP-dependent transfer of a sulfur to tRNA to produce 4-thiouridine in position 8 of tRNAs, which functions as a near-UV photosensor. Also catalyzes the transfer of sulfur to the sulfur carrier protein ThiS, forming ThiS-thiocarboxylate. This is a step in the synthesis of thiazole, in the thiamine biosynthesis pathway. The sulfur is donated as persulfide by IscS. The sequence is that of Probable tRNA sulfurtransferase from Listeria monocytogenes serotype 4b (strain CLIP80459).